The chain runs to 368 residues: UPF0284 protein Cyan7425_0342 (368 aa).

It belongs to the UPF0284 family.

The polypeptide is UPF0284 protein Cyan7425_0342 (Cyanothece sp. (strain PCC 7425 / ATCC 29141)).